A 290-amino-acid polypeptide reads, in one-letter code: Ribonuclease HIII (290 aa).

One can recognise an RNase H type-2 domain in the interval 78–290 (LPLIGTDEVG…FKNTEKAKNA (213 aa)). The a divalent metal cation site is built by Asp-84, Glu-85, and Asp-187.

This sequence belongs to the RNase HII family. RnhC subfamily. Requires Mn(2+) as cofactor. The cofactor is Mg(2+).

The protein localises to the cytoplasm. It catalyses the reaction Endonucleolytic cleavage to 5'-phosphomonoester.. Endonuclease that specifically degrades the RNA of RNA-DNA hybrids. In Streptococcus pneumoniae (strain CGSP14), this protein is Ribonuclease HIII.